The chain runs to 193 residues: ATP synthase subunit b 1 (193 aa).

Residues 13-32 (PAVTGGDTHSGTGVPAEAHG) form a disordered region. A helical membrane pass occupies residues 40-60 (ATFPSQLLWLAITFGLFYLFL).

This sequence belongs to the ATPase B chain family. F-type ATPases have 2 components, F(1) - the catalytic core - and F(0) - the membrane proton channel. F(1) has five subunits: alpha(3), beta(3), gamma(1), delta(1), epsilon(1). F(0) has three main subunits: a(1), b(2) and c(10-14). The alpha and beta chains form an alternating ring which encloses part of the gamma chain. F(1) is attached to F(0) by a central stalk formed by the gamma and epsilon chains, while a peripheral stalk is formed by the delta and b chains.

The protein localises to the cell inner membrane. Its function is as follows. F(1)F(0) ATP synthase produces ATP from ADP in the presence of a proton or sodium gradient. F-type ATPases consist of two structural domains, F(1) containing the extramembraneous catalytic core and F(0) containing the membrane proton channel, linked together by a central stalk and a peripheral stalk. During catalysis, ATP synthesis in the catalytic domain of F(1) is coupled via a rotary mechanism of the central stalk subunits to proton translocation. Functionally, component of the F(0) channel, it forms part of the peripheral stalk, linking F(1) to F(0). The chain is ATP synthase subunit b 1 from Mesorhizobium japonicum (strain LMG 29417 / CECT 9101 / MAFF 303099) (Mesorhizobium loti (strain MAFF 303099)).